Consider the following 436-residue polypeptide: F-box protein SKIP16 (436 aa).

The F-box; degenerate domain occupies 75 to 111; sequence RESFRMYPWNLVKRVRLCWDNLKQWLTLNFPEAKATL. The ApaG domain maps to 295–436; it reads VSVTNGVQVR…FPLELPDYIF (142 aa).

Part of a SCF (ASK-cullin-F-box) protein ligase complex. Interacts with SKP1A/ASK1, SKP1B/ASK2, ASK4, ASK11 and ASK13.

It participates in protein modification; protein ubiquitination. In terms of biological role, component of SCF(ASK-cullin-F-box) E3 ubiquitin ligase complexes, which may mediate the ubiquitination and subsequent proteasomal degradation of target proteins. The sequence is that of F-box protein SKIP16 (SKIP16) from Arabidopsis thaliana (Mouse-ear cress).